The following is a 310-amino-acid chain: Olfactory receptor 4K14 (310 aa).

Residues 1–25 are Extracellular-facing; the sequence is MDPQNYSLVSEFVLHGLCTSRHLQN. Asparagine 5 is a glycosylation site (N-linked (GlcNAc...) asparagine). A helical membrane pass occupies residues 26 to 49; it reads FFFIFFFGVYVAIMLGNLLILVTV. At 50 to 58 the chain is on the cytoplasmic side; sequence ISDPCLHSS. The chain crosses the membrane as a helical span at residues 59–80; that stretch reads PMYFLLGNLAFLDMWLASFATP. Residues 81–101 are Extracellular-facing; it reads KMIRDFLSDQKLISFGGCMAQ. Cysteines 98 and 190 form a disulfide. A helical transmembrane segment spans residues 102–121; sequence IFFLHFTGGAEMVLLVSMAY. Residues 122 to 140 are Cytoplasmic-facing; that stretch reads DRYVAICKPLHYMTLMSWQ. The helical transmembrane segment at 141–159 threads the bilayer; the sequence is TCIRLVLASWVVGFVHSIS. At 160 to 196 the chain is on the extracellular side; sequence QVAFTVNLPYCGPNEVDSFFCDLPLVIKLACMDTYVL. The helical transmembrane segment at 197–220 threads the bilayer; sequence GIIMISDSGLLSLSCFLLLLISYT. The Cytoplasmic portion of the chain corresponds to 221–236; the sequence is VILLAIRQRAAGSTSK. Residues 237 to 259 form a helical membrane-spanning segment; it reads ALSTCSAHIMVVTLFFGPCIFVY. The Extracellular portion of the chain corresponds to 260 to 270; it reads VRPFSRFSVDK. The chain crosses the membrane as a helical span at residues 271 to 290; sequence LLSVFYTIFTPLLNPIIYTL. Residues 291–310 lie on the Cytoplasmic side of the membrane; it reads RNEEMKAAMKKLQNRRVTFQ.

It belongs to the G-protein coupled receptor 1 family.

The protein localises to the cell membrane. Functionally, odorant receptor. This Homo sapiens (Human) protein is Olfactory receptor 4K14 (OR4K14).